The following is a 550-amino-acid chain: C-type lectin domain family 4 member F (550 aa).

The Cytoplasmic portion of the chain corresponds to 1–42; that stretch reads MKEAELNRDVAKFCTDNQCVILQPQGLGPKSAAPMAPRTLRH. The chain crosses the membrane as a helical; Signal-anchor for type II membrane protein span at residues 43-69; sequence VQAIVALVVVTVFFSLLALFVVVLQPW. Residues 70 to 550 are Extracellular-facing; that stretch reads RQKQNEDHPV…DWSVARTDQS (481 aa). Asn-87, Asn-93, Asn-115, Asn-132, Asn-209, and Asn-255 each carry an N-linked (GlcNAc...) asparagine glycan. In terms of domain architecture, C-type lectin spans 438–538; the sequence is NFCVSQGAHL…GTAYNWVCKK (101 aa). Intrachain disulfides connect Cys-440-Cys-536 and Cys-516-Cys-528.

In terms of tissue distribution, kupffer cells.

It localises to the membrane. Its function is as follows. Receptor with an affinity for galactose and fucose. Could be involved in endocytosis. This chain is C-type lectin domain family 4 member F (Clec4f), found in Rattus norvegicus (Rat).